The chain runs to 513 residues: Gluconokinase (513 aa).

ATP contacts are provided by residues Lys16, Thr261, Gly300, and 412 to 416; that span reads GFARS.

The protein belongs to the FGGY kinase family.

It catalyses the reaction D-gluconate + ATP = 6-phospho-D-gluconate + ADP + H(+). It functions in the pathway carbohydrate acid metabolism; D-gluconate degradation. Catabolite repression by gluconate. In Bacillus subtilis (strain 168), this protein is Gluconokinase (gntK).